The sequence spans 44 residues: Antibacterial protein 3 homolog (44 aa).

This sequence belongs to the staphylococcal hemolytic protein family.

Its subcellular location is the secreted. Its function is as follows. Has hemolytic activity and also inhibits the growth of gonococci. This chain is Antibacterial protein 3 homolog, found in Staphylococcus haemolyticus (strain JCSC1435).